A 433-amino-acid chain; its full sequence is N-lysine methyltransferase SMYD2 (433 aa).

Residues 7–241 (GGLERFCSAG…PGDEVFTSYI (235 aa)) form the SET domain. Residue 17–19 (KGR) coordinates S-adenosyl-L-methionine. Residues cysteine 52, cysteine 55, cysteine 65, cysteine 68, cysteine 74, cysteine 78, histidine 86, and cysteine 90 each contribute to the Zn(2+) site. The MYND-type zinc-finger motif lies at 52–90 (CECCFARKEGLSKCGRCKQAFYCDVECQKEDWPLHKLEC). Residues histidine 137, 206–207 (NH), and 258–260 (YFF) each bind S-adenosyl-L-methionine. Position 283 is a phosphoserine (serine 283).

Belongs to the class V-like SAM-binding methyltransferase superfamily. As to quaternary structure, interacts (via MYND-type zinc finger) with EPB41L3. Interacts (via SET domain) with p53/TP53. Interacts with RB1 and HSP90AA1. Interacts with RNA polymerase II and HELZ. Interacts with SIN3A and HDAC1. Highly expressed in heart, skeletal muscle and brain tissue. During cardiac development, it is differentially expressed with highest expression in the neonatal heart while very low expression is detected at 12.5 dpc and adult. Specifically expressed in cardiomyocytes (at protein level).

It is found in the cytoplasm. The protein resides in the cytosol. Its subcellular location is the nucleus. It carries out the reaction L-lysyl(4)-[histone H3] + 3 S-adenosyl-L-methionine = N(6),N(6),N(6)-trimethyl-L-lysyl(4)-[histone H3] + 3 S-adenosyl-L-homocysteine + 3 H(+). The catalysed reaction is L-lysyl-[protein] + S-adenosyl-L-methionine = N(6)-methyl-L-lysyl-[protein] + S-adenosyl-L-homocysteine + H(+). Its function is as follows. Protein-lysine N-methyltransferase that methylates both histones and non-histone proteins, including p53/TP53 and RB1. Specifically trimethylates histone H3 'Lys-4' (H3K4me3) in vivo. The activity requires interaction with HSP90alpha. Shows even higher methyltransferase activity on p53/TP53. Monomethylates 'Lys-370' of p53/TP53, leading to decreased DNA-binding activity and subsequent transcriptional regulation activity of p53/TP53. Monomethylates RB1 at 'Lys-860'. The polypeptide is N-lysine methyltransferase SMYD2 (Smyd2) (Mus musculus (Mouse)).